The chain runs to 456 residues: Maturase-like protein 1 (456 aa).

It to group II intron maturases.

Its subcellular location is the plastid. In terms of biological role, could be required for group III intron excision. This Euglena longa (Euglenophycean alga) protein is Maturase-like protein 1 (mat1).